The sequence spans 413 residues: Cardiolipin synthase B (413 aa).

PLD phosphodiesterase domains follow at residues 108–135 (IFRR…SAEH) and 285–312 (RRRP…DPLS). Residues His113, Lys115, Asp120, His290, Lys292, and Asp297 contribute to the active site. Residues 388 to 413 (AQVPPPAQPEMETQDRVDPENTGVKP) form a disordered region.

Belongs to the phospholipase D family. Cardiolipin synthase subfamily. ClsB sub-subfamily.

The protein resides in the cell membrane. It catalyses the reaction 2 a 1,2-diacyl-sn-glycero-3-phospho-(1'-sn-glycerol) = a cardiolipin + glycerol. Catalyzes the phosphatidyl group transfer from one phosphatidylglycerol molecule to another to form cardiolipin (CL) (diphosphatidylglycerol) and glycerol. In Salmonella typhimurium (strain LT2 / SGSC1412 / ATCC 700720), this protein is Cardiolipin synthase B.